The chain runs to 358 residues: uncharacterized protein (358 aa).

An N-terminal signal peptide occupies residues 1–15; sequence MITGKTISLPLSVIA. Cys16 carries N-palmitoyl cysteine lipidation. A lipid anchor (S-diacylglycerol cysteine) is attached at Cys16. Residues 331-358 form a disordered region; sequence PCGTGSPGNPPPNINSVAQHRISTNTNR. Residues 347-358 show a composition bias toward polar residues; it reads VAQHRISTNTNR.

Its subcellular location is the cell membrane. This is an uncharacterized protein from Sinorhizobium fredii (strain NBRC 101917 / NGR234).